The chain runs to 117 residues: uncharacterized protein (117 aa).

This is an uncharacterized protein from Escherichia coli O6:H1 (strain CFT073 / ATCC 700928 / UPEC).